A 630-amino-acid polypeptide reads, in one-letter code: A-type voltage-gated potassium channel KCND2 (630 aa).

Residues 1 to 184 (MAAGVAAWLP…FENPHTSTMA (184 aa)) are Cytoplasmic-facing. The interaction with KCNIP1, KCNIP2, and other family members stretch occupies residues 2 to 20 (AAGVAAWLPFARAAAIGWM). Position 38 is a phosphothreonine (threonine 38). The interaction with KCNIP1 stretch occupies residues 71 to 90 (ERDFFYHPETQQYFFDRDPD). Zn(2+) contacts are provided by histidine 105, cysteine 111, cysteine 132, and cysteine 133. The helical transmembrane segment at 185–206 (LVFYYVTGFFIAVSVIANVVET) threads the bilayer. Over 207–226 (VPCGSSPGHIKELPCGERYA) the chain is Extracellular. A helical membrane pass occupies residues 227–249 (VAFFCLDTACVMIFTVEYLLRLA). The Cytoplasmic segment spans residues 250–256 (AAPSRYR). A helical membrane pass occupies residues 257 to 281 (FVRSVMSIIDVVAILPYYIGLVMTD). Residues 282–287 (NEDVSG) are Extracellular-facing. A helical; Voltage-sensor membrane pass occupies residues 288 to 307 (AFVTLRVFRVFRIFKFSRHS). The Cytoplasmic portion of the chain corresponds to 308 to 321 (QGLRILGYTLKSCA). Residues 308 to 321 (QGLRILGYTLKSCA) are S4-S5 linker. The helical transmembrane segment at 322–345 (SELGFLLFSLTMAIIIFATVMFYA) threads the bilayer. The Extracellular segment spans residues 346-357 (EKGSSASKFTSI). An intramembrane region (helical) is located at residues 358-369 (PAAFWYTIVTMT). K(+) contacts are provided by threonine 370, leucine 371, glycine 372, and tyrosine 373. A Selectivity filter motif is present at residues 370 to 375 (TLGYGD). Residues 370–377 (TLGYGDMV) lie within the membrane without spanning it. Over 378–380 (PKT) the chain is Extracellular. Residues 381–403 (IAGKIFGSICSLSGVLVIALPVP) traverse the membrane as a helical segment. At 404 to 630 (VIVSNFSRIY…GGNIVRVSAL (227 aa)) the chain is on the cytoplasmic side. Positions 474–489 (FETQHHHLLHCLEKTT) are required for dendritic targeting. The tract at residues 474 to 630 (FETQHHHLLH…GGNIVRVSAL (157 aa)) is important for normal channel activation and inactivation, for interaction with KCNIP2, and probably other family members as well. A phosphoserine mark is found at serine 548, serine 552, serine 572, and serine 575. Positions 600–622 (IPTPPVTTPEGDDRPESPEYSGG) are disordered. Residues threonine 602 and threonine 607 each carry the phosphothreonine modification. Residue serine 616 is modified to Phosphoserine. A PDZ-binding motif is present at residues 627–630 (VSAL).

This sequence belongs to the potassium channel family. D (Shal) (TC 1.A.1.2) subfamily. Kv4.2/KCND2 sub-subfamily. Homotetramer or heterotetramer with KCND1 or KCND3. Associates with the regulatory subunits KCNIP2, KCNIP3 and KCNIP4. Interacts with the regulatory subunit KCNIP1; this interaction mediates the capture of both the N- and C-terminus of KCND2, preventing N-type inactivation and stabilizing the S6 conformation, thereby accelerating closed state inactivation and recovery. In vivo, probably exists as heteromeric complex containing variable proportions of KCND1, KCND2, KCND3, KCNIP1, KCNIP2, KCNIP3, KCNIP4, DPP6 and DPP10. The tetrameric channel can associate with up to four regulatory subunits, such as KCNIP2 or KCNIP4. Interaction with four KCNIP4 chains does not reduce interaction with DPP10. Interacts with DLG4 and NCS1/FREQ. Interacts with DLG1. Probably part of a complex consisting of KCNIP1, KCNIP2 isoform 3 and KCND2. Interacts with FLNA, FLNC and DPP10. Identified in a complex with cAMP-dependent protein kinase (PKA), CAV3, AKAP6 and KCND3 in cardiac myocytes. Interacts (via S1 and S2 helices) with DPP6; this interaction stabilizes the conformation of the S1-S2 helices and facilitates S4 conformational change, including S4 sliding up and down, thereby accelerating activation, inactivation, and recovery. In terms of processing, phosphorylation in response to MAPK activation is increased in stimulated dendrites. Interaction with KCNIP2 and DPP6 propomtes phosphorylation by PKA at Ser-552. Phosphorylation at Ser-552 has no effect on interaction with KCNIP3, but is required for the regulation of channel activity by KCNIP3. Phosphorylation at Ser-552 leads to KCND2 internalization. Phosphorylated by MAPK in response to signaling via the metabotropic glutamate receptor GRM5. Phosphorylation at Ser-616 is required for the down-regulation of neuronal A-type currents in response to signaling via GRM5.

It localises to the cell membrane. The protein localises to the cell projection. The protein resides in the dendrite. Its subcellular location is the synapse. It is found in the perikaryon. It localises to the postsynaptic cell membrane. The protein localises to the dendritic spine. The protein resides in the sarcolemma. Its subcellular location is the cell junction. It is found in the membrane. It localises to the caveola. The catalysed reaction is K(+)(in) = K(+)(out). Its function is as follows. Voltage-gated potassium channel that mediates transmembrane potassium transport in excitable membranes, primarily in the brain, but also in rodent heart. Mediates the major part of the dendritic A-type current I(SA) in brain neurons. This current is activated at membrane potentials that are below the threshold for action potentials. It regulates neuronal excitability, prolongs the latency before the first spike in a series of action potentials, regulates the frequency of repetitive action potential firing, shortens the duration of action potentials and regulates the back-propagation of action potentials from the neuronal cell body to the dendrites. Contributes to the regulation of the circadian rhythm of action potential firing in suprachiasmatic nucleus neurons, which regulates the circadian rhythm of locomotor activity. Functions downstream of the metabotropic glutamate receptor GRM5 and plays a role in neuronal excitability and in nociception mediated by activation of GRM5. Mediates the transient outward current I(to) in rodent heart left ventricle apex cells, but not in human heart, where this current is mediated by another family member. Forms tetrameric potassium-selective channels through which potassium ions pass in accordance with their electrochemical gradient. The channel alternates between opened and closed conformations in response to the voltage difference across the membrane. Can form functional homotetrameric channels and heterotetrameric channels that contain variable proportions of KCND2 and KCND3; channel properties depend on the type of pore-forming alpha subunits that are part of the channel. In vivo, membranes probably contain a mixture of heteromeric potassium channel complexes. Interaction with specific isoforms of the regulatory subunits KCNIP1, KCNIP2, KCNIP3 or KCNIP4 strongly increases expression at the cell surface and thereby increases channel activity; it modulates the kinetics of channel activation and inactivation, shifts the threshold for channel activation to more negative voltage values, shifts the threshold for inactivation to less negative voltages and accelerates recovery after inactivation. Likewise, interaction with DPP6 or DPP10 promotes expression at the cell membrane and regulates both channel characteristics and activity. Upon depolarization, the channel goes from a resting closed state (C state) to an activated but non-conducting state (C* state), from there, the channel may either inactivate (I state) or open (O state). This is A-type voltage-gated potassium channel KCND2 from Mustela putorius furo (European domestic ferret).